Here is a 193-residue protein sequence, read N- to C-terminus: MASLLDSVTVTRVFSLPIAASVSSSSAAPSVSRRRISPARFLEFRGLKSSRSLVTQSASLGANRRTRIARGGRIACEAQDTTAAAVEVPNLSDSEWQTKVLESDVPVLVEFWAPWCGPCRMIHPIVDQLAKDFAGKFKFYKINTDESPNTANRYGIRSVPTVIIFKGGEKKDSIIGAVPRETLEKTIERFLVE.

The N-terminal 82 residues, methionine 1–threonine 82, are a transit peptide targeting the chloroplast. The 110-residue stretch at alanine 83–valine 192 folds into the Thioredoxin domain. Active-site nucleophile residues include cysteine 116 and cysteine 119. Cysteines 116 and 119 form a disulfide.

Belongs to the thioredoxin family. Plant M-type subfamily.

The protein resides in the plastid. The protein localises to the chloroplast stroma. Functionally, thiol-disulfide oxidoreductase involved in the redox regulation of enzyme of the oxidative pentose phosphate pathway. Under reducing conditions, inhibits the glucose-6-phosphate dehydrogenase. This chain is Thioredoxin M4, chloroplastic, found in Arabidopsis thaliana (Mouse-ear cress).